We begin with the raw amino-acid sequence, 424 residues long: MNKLVIRGGKKLSGTVAASGSKNSALPVIAATLLTPDGTFGINRIPDLKDVRTFIQLLEYLGAAVSFENNRLEVSSSDLKSIEAPYELVKKMRASIYVLGPLLARFGHTRVSLPGGCAFGPRPVDLHIMAMEKLGATVTIEQGFIDAKVNGSRLRGAEIDFPISSVGATGNALMAAVTAEGKTVLQNAALEPEIECLCRFLQKMGANISGIGTTTLVIEGVDQLKAVEFDNIFDRIEAGTLLGAAAITGGSVTVTGTVPEHLGSVLDAFRQAGCIVTVKDDAITLTAPEELQPVDITARPYPEFPTDMQAQWMALMTQAHGDSTIIDRIYLERFNHLPELNRLGAHIEIRDNWALVHGPQELTGTKVMSTDLRASACLVLAGLVAKETTEVLRVYHLDRGYESIEKKLSALGADIKREQYQEFS.

Position 22-23 (22-23) interacts with phosphoenolpyruvate; sequence KN. Residue R93 coordinates UDP-N-acetyl-alpha-D-glucosamine. Residue C117 is the Proton donor of the active site. Residue C117 is modified to 2-(S-cysteinyl)pyruvic acid O-phosphothioketal. Residues 122–126, D307, and I329 contribute to the UDP-N-acetyl-alpha-D-glucosamine site; that span reads RPVDL.

The protein belongs to the EPSP synthase family. MurA subfamily.

It is found in the cytoplasm. It catalyses the reaction phosphoenolpyruvate + UDP-N-acetyl-alpha-D-glucosamine = UDP-N-acetyl-3-O-(1-carboxyvinyl)-alpha-D-glucosamine + phosphate. Its pathway is cell wall biogenesis; peptidoglycan biosynthesis. In terms of biological role, cell wall formation. Adds enolpyruvyl to UDP-N-acetylglucosamine. The protein is UDP-N-acetylglucosamine 1-carboxyvinyltransferase of Chlorobaculum parvum (strain DSM 263 / NCIMB 8327) (Chlorobium vibrioforme subsp. thiosulfatophilum).